Reading from the N-terminus, the 337-residue chain is Lipoyl synthase (337 aa).

[4Fe-4S] cluster-binding residues include cysteine 81, cysteine 86, cysteine 92, cysteine 107, cysteine 111, cysteine 114, and serine 323. The Radical SAM core domain occupies 93 to 312 (FSHGTATFMI…EDYGNALGFS (220 aa)).

This sequence belongs to the radical SAM superfamily. Lipoyl synthase family. [4Fe-4S] cluster is required as a cofactor.

The protein localises to the cytoplasm. It catalyses the reaction [[Fe-S] cluster scaffold protein carrying a second [4Fe-4S](2+) cluster] + N(6)-octanoyl-L-lysyl-[protein] + 2 oxidized [2Fe-2S]-[ferredoxin] + 2 S-adenosyl-L-methionine + 4 H(+) = [[Fe-S] cluster scaffold protein] + N(6)-[(R)-dihydrolipoyl]-L-lysyl-[protein] + 4 Fe(3+) + 2 hydrogen sulfide + 2 5'-deoxyadenosine + 2 L-methionine + 2 reduced [2Fe-2S]-[ferredoxin]. Its pathway is protein modification; protein lipoylation via endogenous pathway; protein N(6)-(lipoyl)lysine from octanoyl-[acyl-carrier-protein]: step 2/2. In terms of biological role, catalyzes the radical-mediated insertion of two sulfur atoms into the C-6 and C-8 positions of the octanoyl moiety bound to the lipoyl domains of lipoate-dependent enzymes, thereby converting the octanoylated domains into lipoylated derivatives. The chain is Lipoyl synthase from Xanthomonas campestris pv. campestris (strain B100).